Reading from the N-terminus, the 440-residue chain is MREEQVSDCGSITLEEWNGSSSTKLFKTATITASSSLSIQRSANRFNHVWRRVLQAFVPEGFPGSVTPDYVGFQLWDTLQGLSTYTKMMLSTQALLSAIGVGEKSATVIGATFQWFLRDFTGMLGGILFTFYQGSNLDSNAKMWRLVADLMNDIGMLMDLLSPLFPSAFIVVVCLGSLSRSFTGVASGATRAALTQHFALQDNAADISAKEGSQETMATMMGMSLGMLLARFTSGNPMAIWLSFLSLTVFHMYANYRAVRCLVLNSLNFERSSILLTHFIQTGQVLSPEQVSSMEGVLPLWATSLRSTNSKPLHKRVQLGVRVSSLPRLDMLQLLNGVGASSYKNAKYLLAHIKGNVSVILHKDSKPADVLKSYIHAIVLANLMEKSTSFYSEGEAWIDKHYDELLHKLRSGGWKTERLLSPSITWRANWISHTSAAKFD.

A run of 3 helical transmembrane segments spans residues 109 to 129, 154 to 174, and 232 to 252; these read IGAT…GILF, IGML…VVVC, and FTSG…VFHM.

Belongs to the RUS1 family.

Its subcellular location is the membrane. This Arabidopsis thaliana (Mouse-ear cress) protein is Protein root UVB sensitive 3.